The following is a 464-amino-acid chain: Serine/threonine-protein kinase 38-like (464 aa).

Ala-2 bears the N-acetylalanine mark. The tract at residues 64–89 is S100B binding; it reads KLRRSQHARKETEFLRLKRTRLGLDD. Residue Thr-75 is modified to Phosphothreonine. Residues 90 to 383 enclose the Protein kinase domain; the sequence is FESLKVIGRG…VEEIKGHPFF (294 aa). ATP-binding positions include 96–104 and Lys-119; that span reads IGRGAFGEV. Asp-213 (proton acceptor) is an active-site residue. Ser-282 carries the post-translational modification Phosphoserine; by autocatalysis. Positions 384–453 constitute an AGC-kinase C-terminal domain; the sequence is EGVDWGHIRE…KRFEGLTQRG (70 aa). Thr-442 carries the post-translational modification Phosphothreonine; by STK24/MST3.

This sequence belongs to the protein kinase superfamily. AGC Ser/Thr protein kinase family. Homodimeric S100B binds two molecules of STK38L. Interacts with MOB1 and MOB2. Interacts with MICAL1; leading to inhibit the protein kinase activity by antagonizing activation by MST1/STK4. The cofactor is Mg(2+). Highly expressed in the large and small intestine, stomach and testis. High levels also present in the brain, in particular the neurocortex, basal forebrain, hippocampus, the amygdala, cerebellum and brainstem.

The protein localises to the cytoplasm. It localises to the cytoskeleton. The protein resides in the membrane. It carries out the reaction L-seryl-[protein] + ATP = O-phospho-L-seryl-[protein] + ADP + H(+). It catalyses the reaction L-threonyl-[protein] + ATP = O-phospho-L-threonyl-[protein] + ADP + H(+). Activated by binding of S100B which releases autoinhibitory N-lobe interactions, enabling ATP to bind and the autophosphorylation of Ser-282. Thr-442 then undergoes calcium-dependent phosphorylation by STK24/MST3. Interactions between phosphorylated Thr-442 and the N-lobe promote additional structural changes that complete the activation of the kinase. Autoinhibition is also released by the binding of MOB1/MOBKL1A and MOB2 to the N-terminal of STK38L. In terms of biological role, involved in the regulation of structural processes in differentiating and mature neuronal cells. The polypeptide is Serine/threonine-protein kinase 38-like (Mus musculus (Mouse)).